The sequence spans 468 residues: RuvB-like helicase 2 (468 aa).

76–83 (GPPSTGKT) serves as a coordination point for ATP.

Belongs to the RuvB family. In terms of assembly, may form heterododecamers with RVB1. Component of the SWR1 chromatin remodeling complex, the INO80 chromatin remodeling complex, and of the R2TP complex.

It is found in the nucleus. It catalyses the reaction ATP + H2O = ADP + phosphate + H(+). DNA helicase which participates in several chromatin remodeling complexes, including the SWR1 and the INO80 complexes. The SWR1 complex mediates the ATP-dependent exchange of histone H2A for the H2A variant HZT1 leading to transcriptional regulation of selected genes by chromatin remodeling. The INO80 complex remodels chromatin by shifting nucleosomes and is involved in DNA repair. Also involved in pre-rRNA processing. This chain is RuvB-like helicase 2 (rvb2), found in Emericella nidulans (strain FGSC A4 / ATCC 38163 / CBS 112.46 / NRRL 194 / M139) (Aspergillus nidulans).